A 487-amino-acid chain; its full sequence is Glycogen synthase (487 aa).

Residue Lys-15 coordinates ADP-alpha-D-glucose.

Belongs to the glycosyltransferase 1 family. Bacterial/plant glycogen synthase subfamily.

It carries out the reaction [(1-&gt;4)-alpha-D-glucosyl](n) + ADP-alpha-D-glucose = [(1-&gt;4)-alpha-D-glucosyl](n+1) + ADP + H(+). It functions in the pathway glycan biosynthesis; glycogen biosynthesis. In terms of biological role, synthesizes alpha-1,4-glucan chains using ADP-glucose. In Leptothrix cholodnii (strain ATCC 51168 / LMG 8142 / SP-6) (Leptothrix discophora (strain SP-6)), this protein is Glycogen synthase.